The primary structure comprises 265 residues: Tetrapyrrole-binding protein, chloroplastic (265 aa).

The disordered stretch occupies residues 1-24 (MATTNSLHHHHHSSPSYTHHRNNL). The transit peptide at 1–69 (MATTNSLHHH…TAVSAVSTTN (69 aa)) directs the protein to the chloroplast. Over residues 7–23 (LHHHHHSSPSYTHHRNN) the composition is skewed to basic residues.

As to quaternary structure, interacts with CHLH, the protoporphyrin IX-binding subunit of Mg-chelatase. Monomer or extremely compact dimer.

The protein resides in the plastid. It localises to the chloroplast membrane. Functionally, regulates chlorophyll synthesis and plastid-to-nucleus signal transduction by binding both the product and the substrate of Mg-chelatase, an enzyme that produces magnesium-protoporphyrin IX (Mg-Proto). Also activates Mg-chelatase. Neither binds abscisic acid (ABA) nor is involved in ABA signaling. This Arabidopsis thaliana (Mouse-ear cress) protein is Tetrapyrrole-binding protein, chloroplastic (GUN4).